Here is a 230-residue protein sequence, read N- to C-terminus: NAD-dependent protein deacylase 1 (230 aa).

The Deacetylase sirtuin-type domain occupies 1–226 (MESGIPTYRE…SHLSAFLSRE (226 aa)). Positions 41 and 44 each coordinate substrate. Position 75-78 (75-78 (QNID)) interacts with NAD(+). H93 (proton acceptor) is an active-site residue. C101, C104, C128, and C131 together coordinate Zn(2+). NAD(+)-binding positions include 168-170 (GTS), 194-196 (NTV), and A212.

This sequence belongs to the sirtuin family. Class III subfamily. It depends on Zn(2+) as a cofactor.

It localises to the cytoplasm. The catalysed reaction is N(6)-acetyl-L-lysyl-[protein] + NAD(+) + H2O = 2''-O-acetyl-ADP-D-ribose + nicotinamide + L-lysyl-[protein]. It carries out the reaction N(6)-succinyl-L-lysyl-[protein] + NAD(+) + H2O = 2''-O-succinyl-ADP-D-ribose + nicotinamide + L-lysyl-[protein]. Functionally, NAD-dependent lysine deacetylase and desuccinylase that specifically removes acetyl and succinyl groups on target proteins. Modulates the activities of several proteins which are inactive in their acylated form. The protein is NAD-dependent protein deacylase 1 of Pseudomonas syringae pv. tomato (strain ATCC BAA-871 / DC3000).